The following is a 127-amino-acid chain: Protein E7 (127 aa).

Residues 2–56 form an E7 terminal domain region; the sequence is VQGPTTHRNLDDSPAGPLLILSPCAGTPTRVPAAPDAPDFRLPCHFGRPTRKRGP. The interval 33–66 is disordered; that stretch reads PAAPDAPDFRLPCHFGRPTRKRGPSTPPLSSPGK. A zinc finger lies at 82–118; sequence CGHCGKDLTFAVKTGSTTLLGFEHLLNSDLDLLCPRC. A Nuclear export signal motif is present at residues 100-108; sequence LLGFEHLLN.

This sequence belongs to the papillomaviridae E7 protein family. Homodimer. Homooligomer. Interacts with host RB1; this interaction induces dissociation of RB1-E2F1 complex thereby disrupting RB1 activity. Interacts with host EP300; this interaction represses EP300 transcriptional activity. Interacts with protein E2; this interaction inhibits E7 oncogenic activity. Interacts with host TMEM173/STING; this interaction impairs the ability of TMEM173/STING to sense cytosolic DNA and promote the production of type I interferon (IFN-alpha and IFN-beta). Highly phosphorylated.

The protein resides in the host cytoplasm. Its subcellular location is the host nucleus. Plays a role in viral genome replication by driving entry of quiescent cells into the cell cycle. Stimulation of progression from G1 to S phase allows the virus to efficiently use the cellular DNA replicating machinery to achieve viral genome replication. E7 protein has both transforming and trans-activating activities. Induces the disassembly of the E2F1 transcription factor from RB1, with subsequent transcriptional activation of E2F1-regulated S-phase genes. Interferes with host histone deacetylation mediated by HDAC1 and HDAC2, leading to transcription activation. Also plays a role in the inhibition of both antiviral and antiproliferative functions of host interferon alpha. Interaction with host TMEM173/STING impairs the ability of TMEM173/STING to sense cytosolic DNA and promote the production of type I interferon (IFN-alpha and IFN-beta). This is Protein E7 from Bos taurus (Bovine).